Reading from the N-terminus, the 132-residue chain is Agouti-signaling protein (132 aa).

The signal sequence occupies residues 1–22 (MDVTRLLLATLLVFLCFFTAYS). The N-linked (GlcNAc...) asparagine glycan is linked to asparagine 39. A disordered region spans residues 62–88 (ISRKEAEKKRSSKKEASMKKVARPRTP). The span at 63 to 79 (SRKEAEKKRSSKKEASM) shows a compositional bias: basic and acidic residues. Cystine bridges form between cysteine 93-cysteine 108, cysteine 100-cysteine 114, cysteine 107-cysteine 125, cysteine 111-cysteine 132, and cysteine 116-cysteine 123. Residues 93–132 (CVATRDSCKPPAPACCDPCASCQCRFFRSACSCRVLSLNC) form the Agouti domain.

The protein localises to the secreted. Functionally, involved in the regulation of melanogenesis. The binding of ASP to MC1R precludes alpha-MSH initiated signaling and thus blocks production of cAMP, leading to a down-regulation of eumelanogenesis (brown/black pigment) and thus increasing synthesis of pheomelanin (yellow/red pigment). The polypeptide is Agouti-signaling protein (ASIP) (Chlorocebus aethiops (Green monkey)).